The primary structure comprises 27 residues: Natriuretic peptides A (27 aa).

A disulfide bridge connects residues Cys-7 and Cys-23.

It belongs to the natriuretic peptide family.

The protein resides in the secreted. Hormone playing a key role in cardiovascular homeostasis through regulation of natriuresis, diuresis, and vasodilation. Has a cGMP-stimulating activity. The chain is Natriuretic peptides A (nppa) from Anguilla japonica (Japanese eel).